Reading from the N-terminus, the 316-residue chain is Diacylglycerol kinase (316 aa).

A DAGKc domain is found at 1–132; that stretch reads MRKRARIIYN…VDIGKMNNRY (132 aa). Residues 10-14, threonine 41, 67-73, and threonine 94 contribute to the ATP site; these read NPTSG and GDGTLNE. Lysine 213, aspartate 216, and tyrosine 218 together coordinate Mg(2+). Residue glutamate 273 is the Proton acceptor of the active site.

It belongs to the diacylglycerol/lipid kinase family. As to quaternary structure, homodimer. It depends on Mg(2+) as a cofactor.

It carries out the reaction a 1,2-diacyl-sn-glycerol + ATP = a 1,2-diacyl-sn-glycero-3-phosphate + ADP + H(+). In terms of biological role, catalyzes the phosphorylation of diacylglycerol (DAG) into phosphatidic acid. Is a key enzyme involved in the production of lipoteichoic acid by reintroducing DAG formed from the breakdown of membrane phospholipids into the phosphatidylglycerol biosynthetic pathway. The sequence is that of Diacylglycerol kinase (dagK) from Staphylococcus epidermidis (strain ATCC 35984 / DSM 28319 / BCRC 17069 / CCUG 31568 / BM 3577 / RP62A).